Here is a 183-residue protein sequence, read N- to C-terminus: Adenylate kinase (183 aa).

ATP is bound at residue 12-17 (GAGKGT). Positions 32–61 (STGDLLRAEVSAGSALGQEAESVMNRGELV) are NMP. Residues threonine 33, arginine 38, 59–61 (ELV), 86–89 (GFPR), and glutamine 93 each bind AMP. An LID region spans residues 127-133 (SRGRDDD). Arginine 128 lines the ATP pocket. 2 residues coordinate AMP: arginine 130 and arginine 141. Glycine 169 is a binding site for ATP.

Belongs to the adenylate kinase family. As to quaternary structure, monomer.

The protein localises to the cytoplasm. It carries out the reaction AMP + ATP = 2 ADP. The protein operates within purine metabolism; AMP biosynthesis via salvage pathway; AMP from ADP: step 1/1. Catalyzes the reversible transfer of the terminal phosphate group between ATP and AMP. Plays an important role in cellular energy homeostasis and in adenine nucleotide metabolism. The polypeptide is Adenylate kinase (Synechococcus sp. (strain CC9311)).